Reading from the N-terminus, the 2383-residue chain is Highly reducing polyketide synthase SAT13 (2383 aa).

The region spanning 6–433 is the Ketosynthase family 3 (KS3) domain; the sequence is PVPLAIVGIA…GTNAHAVLER (428 aa). Residues Cys180, His315, and His355 each act as for beta-ketoacyl synthase activity in the active site. Positions 536 to 828 are malonyl-CoA:ACP transacylase (MAT) domain; the sequence is FIFTGQGAQW…IGPHSALAGP (293 aa). Residue Ser626 is the For malonyltransferase activity of the active site. The tract at residues 922 to 1062 is N-terminal hotdog fold; the sequence is HDLLGLRMTE…GNIVVVFKTS (141 aa). A dehydratase (DH) domain region spans residues 922-1239; the sequence is HDLLGLRMTE…GMELRSFVAR (318 aa). One can recognise a PKS/mFAS DH domain in the interval 922–1242; sequence HDLLGLRMTE…LRSFVARDSN (321 aa). Residue His954 is the Proton acceptor; for dehydratase activity of the active site. The C-terminal hotdog fold stretch occupies residues 1087–1242; it reads GKLTHAGQLY…LRSFVARDSN (156 aa). The active-site Proton donor; for dehydratase activity is the Asp1152. The tract at residues 1669 to 1977 is enoylreductase (ER) domain; that stretch reads DGQNRLVFVE…KQGSMKKCVL (309 aa). The segment at 2001–2184 is catalytic ketoreductase (KRc) domain; that stretch reads ATYVVAGGLG…MSLNIGGIKD (184 aa). The Carrier domain maps to 2287–2364; the sequence is EISEFVARSI…DLAQKVVSRS (78 aa). At Ser2324 the chain carries O-(pantetheine 4'-phosphoryl)serine.

It functions in the pathway mycotoxin biosynthesis. In terms of biological role, highly reducing polyketide synthase; part of the satratoxin SC2 cluster involved in the biosynthesis of satratoxins, trichothecene mycotoxins that are associated with human food poisonings. Satratoxins are suggested to be made by products of multiple gene clusters (SC1, SC2 and SC3) that encode 21 proteins in all, including polyketide synthases, acetyltransferases, and other enzymes expected to modify the trichothecene skeleton. SC1 encodes 10 proteins, SAT1 to SAT10. The largest are SAT8, which encodes a putative polyketide synthase (PKS) with a conventional non-reducing architecture, and SAT10, a putative protein containing four ankyrin repeats and thus may be involved in protein scaffolding. The putative short-chain reductase SAT3 may assist the PKS in some capacity. SAT6 contains a secretory lipase domain and acts probably as a trichothecene esterase. SAT5 encodes a putative acetyltransferase, and so, with SAT6, may affect endogenous protection from toxicity. The probable transcription factor SAT9 may regulate the expression of the SC1 cluster. SC2 encodes proteins SAT11 to SAT16, the largest of which encodes the putative reducing PKS SAT13. SAT11 is a cytochrome P450 monooxygenase, while SAT14 and SAT16 are probable acetyltransferases. The SC2 cluster may be regulated by the transcription factor SAT15. SC3 is a small cluster that encodes 5 proteins, SAT17 to SAT21. SAT21 is a putative MFS-type transporter which may have a role in exporting secondary metabolites. The four other proteins putatively encoded in SC3 include the taurine hydroxylase-like protein SAT17, the O-methyltransferase SAT18, the acetyltransferase SAT19, and the Cys6-type zinc finger SAT20, the latter being probably involved in regulation of SC3 expression. This is Highly reducing polyketide synthase SAT13 from Stachybotrys chartarum (strain CBS 109288 / IBT 7711) (Toxic black mold).